The following is a 108-amino-acid chain: Urease subunit beta (108 aa).

It belongs to the urease beta subunit family. As to quaternary structure, heterotrimer of UreA (gamma), UreB (beta) and UreC (alpha) subunits. Three heterotrimers associate to form the active enzyme.

The protein localises to the cytoplasm. It catalyses the reaction urea + 2 H2O + H(+) = hydrogencarbonate + 2 NH4(+). The protein operates within nitrogen metabolism; urea degradation; CO(2) and NH(3) from urea (urease route): step 1/1. This Nocardia farcinica (strain IFM 10152) protein is Urease subunit beta.